The following is a 303-amino-acid chain: Putative S-adenosyl-L-methionine-dependent methyltransferase MSMEG_1479/MSMEI_1443 (303 aa).

S-adenosyl-L-methionine is bound by residues Asp130 and 159 to 160 (DL).

Belongs to the UPF0677 family.

Functionally, exhibits S-adenosyl-L-methionine-dependent methyltransferase activity. This chain is Putative S-adenosyl-L-methionine-dependent methyltransferase MSMEG_1479/MSMEI_1443, found in Mycolicibacterium smegmatis (strain ATCC 700084 / mc(2)155) (Mycobacterium smegmatis).